We begin with the raw amino-acid sequence, 489 residues long: Oxysterol-binding protein-related protein 1B (489 aa).

It belongs to the OSBP family. In terms of tissue distribution, expressed at low levels in flowers.

In terms of biological role, may be involved in the transport of sterols. This is Oxysterol-binding protein-related protein 1B (ORP1B) from Arabidopsis thaliana (Mouse-ear cress).